A 313-amino-acid chain; its full sequence is Intelectin-like protein (313 aa).

A Fibrinogen C-terminal domain is found at 33–251 (TSCCSQTSPG…NNEKAPMALC (219 aa)). Ca(2+) is bound by residues H86, E87, N89, G92, G97, D98, and D133. 3 disulfide bridges follow: C94–C280, C199–C259, and C251–C265. Ca(2+) is bound by residues N260, E262, E274, and D282. Residues 262–263 (EH) and E274 each bind a carbohydrate.

As to quaternary structure, monomer, homodimer, homotrimer and homotetramer. Mostly monomeric or dimeric.

Its subcellular location is the secreted. Functionally, binds mannan, mannose and, to a lesser degree, D-lactose, N-acetylgalactosamine, N-acetylglucosamine and beta-D-glucose. This Alligator mississippiensis (American alligator) protein is Intelectin-like protein.